The sequence spans 535 residues: MANLDLSKYGITGVTEIVHNPSYDVLFAEETKPGLEGFEKGQVTNMGAVNVMTGVYTGRSPKDKFFVKDETSENTVWWTSEEYKNDNKPVDAKCWAAVKDLATKELSNKRLFVVDAFCGANENSRLKLRFIMEVAWQAHFVTNMFIRPTAEELANFGEPDFVIMNASKAKVENYKELGLNSETAVVFNLTEKIQVILNTWYGGEMKKGMFSYMNYLLPLNGMASMHCSANTDKEGKSSAIFFGLSGTGKTTLSTDPKRLLIGDDEHGWDDEGVFNFEGGCYAKVINLDKESEPDIWNAIKRDALLENCTVNAEGEINFADKSVTENTRVSYPIYHIENIVKPVSKGPHAKQVIFLSADAFGVLPPVSILNAEQTKYYFLSGFTAKLAGTERGITEPTPTFSACFGAAFLSLHPTKYGEELVKKMEKTGAKAYLVNTGWNGTGKRISIKDTRGIIDAILDGSIDKAPTKVMPYFDFVVPTELPGVDPKILDPRDTYECACQWEEKAKDLAGRFIKNFAKFTGNEAGKALVAAGPKL.

Arg-59, Tyr-201, and Lys-207 together coordinate substrate. ATP is bound by residues Lys-207, His-226, and 243-251 (GLSGTGKTT). The Mn(2+) site is built by Lys-207 and His-226. A Mn(2+)-binding site is contributed by Asp-264. ATP contacts are provided by residues Glu-292, Arg-328, 444-445 (RI), and Thr-450. Substrate is bound at residue Arg-328.

Belongs to the phosphoenolpyruvate carboxykinase (ATP) family. Mn(2+) is required as a cofactor.

The protein localises to the cytoplasm. It catalyses the reaction oxaloacetate + ATP = phosphoenolpyruvate + ADP + CO2. Its pathway is carbohydrate biosynthesis; gluconeogenesis. Its function is as follows. Involved in the gluconeogenesis. Catalyzes the conversion of oxaloacetate (OAA) to phosphoenolpyruvate (PEP) through direct phosphoryl transfer between the nucleoside triphosphate and OAA. In Bacteroides thetaiotaomicron (strain ATCC 29148 / DSM 2079 / JCM 5827 / CCUG 10774 / NCTC 10582 / VPI-5482 / E50), this protein is Phosphoenolpyruvate carboxykinase (ATP).